The sequence spans 215 residues: Adenylate kinase (215 aa).

Glycine 10–threonine 15 serves as a coordination point for ATP. Residues serine 30–valine 59 are NMP. AMP-binding positions include threonine 31, arginine 36, glycine 57–valine 59, glycine 85–arginine 88, and glutamine 92. The interval glycine 122–aspartate 159 is LID. ATP contacts are provided by residues arginine 123 and isoleucine 132–tyrosine 133. Residues arginine 156 and arginine 167 each contribute to the AMP site. Glycine 201 serves as a coordination point for ATP.

The protein belongs to the adenylate kinase family. In terms of assembly, monomer.

It is found in the cytoplasm. It carries out the reaction AMP + ATP = 2 ADP. Its pathway is purine metabolism; AMP biosynthesis via salvage pathway; AMP from ADP: step 1/1. Functionally, catalyzes the reversible transfer of the terminal phosphate group between ATP and AMP. Plays an important role in cellular energy homeostasis and in adenine nucleotide metabolism. This is Adenylate kinase from Pseudomonas savastanoi pv. phaseolicola (strain 1448A / Race 6) (Pseudomonas syringae pv. phaseolicola (strain 1448A / Race 6)).